A 2242-amino-acid polypeptide reads, in one-letter code: DEP domain-containing protein DDB_G0279099 (2242 aa).

Disordered stretches follow at residues 388-465 (SQNT…SNNS), 576-644 (DSNA…YSRV), 701-730 (PILR…FDQK), 871-965 (DPTT…TKKS), 1077-1194 (QLQL…AFNS), 1287-1336 (GSQQ…MNGS), 1384-1414 (SELL…ALPE), 1446-1471 (AQSS…NTSG), and 1502-1521 (SNNN…NSLN). Residues 392–440 (IQNNNNNNNNNNNNNNNNNNNNNNNNNNNNNNNNNNNNNSNNNKNNQNN) are a coiled coil. A compositionally biased stretch (low complexity) spans 581 to 614 (GGNNNNNYNNNNGNGNGHNHNNHNNNNNNNNNND). A compositionally biased stretch (acidic residues) spans 622–631 (EPSDFSDTED). Composition is skewed to polar residues over residues 632–642 (NSSTTPNSQYS) and 719–729 (HPISPSNSFDQ). Residues 872–955 (PTTTTTTGGT…PNSSNTVPNS (84 aa)) are compositionally biased toward low complexity. A coiled-coil region spans residues 1066-1101 (IPTVENNQHQQQLQLEQQEKEKEKARLAALEKKKPF). Residues 1082-1106 (QQEKEKEKARLAALEKKKPFPREDS) show a composition bias toward basic and acidic residues. 2 stretches are compositionally biased toward low complexity: residues 1108 to 1182 (STLI…ATTA) and 1287 to 1299 (GSQQ…GSQS). A compositionally biased stretch (polar residues) spans 1300–1311 (APTSPLTPHKNI). Low complexity-rich tracts occupy residues 1312 to 1336 (NTNN…MNGS), 1384 to 1410 (SELL…GENN), and 1446 to 1470 (AQSS…TNTS). One can recognise a DEP domain in the interval 1556–1629 (IGIKMTERKY…DGQFYYRLKE (74 aa)). Positions 1645–1668 (TNNNFNNNNTNSNNNQQQQQQQQS) are enriched in low complexity. Disordered stretches follow at residues 1645-1763 (TNNN…SMSN), 1803-1910 (DEAN…QQQQ), 2122-2145 (NYNN…NLLK), and 2165-2218 (NSDT…KNEM). Polar residues predominate over residues 1669 to 1702 (IPSVTSSAVNSPNKDSNTPDHSPISSPKQIGNKL). Low complexity-rich tracts occupy residues 1703 to 1760 (SSSS…IQSS) and 1807 to 1848 (GDNN…SSNS). A coiled-coil region spans residues 1791 to 1821 (LTNKEKDKEKEIDEANGDNNNNNNNNNNNNN). Composition is skewed to polar residues over residues 1849–1871 (GQGS…TNPL) and 1879–1889 (YGSSVQNSNQH). Composition is skewed to low complexity over residues 1890–1910 (QQQQ…QQQQ) and 2122–2133 (NYNNNNNNNNNN). Composition is skewed to basic and acidic residues over residues 2166 to 2181 (SDTE…DNNH) and 2192 to 2218 (DTDH…KNEM).

It in the N-terminal section; belongs to the IML1 family.

The sequence is that of DEP domain-containing protein DDB_G0279099 from Dictyostelium discoideum (Social amoeba).